The following is a 777-amino-acid chain: UPF0313 protein VP1980 (777 aa).

The 280-residue stretch at 363–642 folds into the Radical SAM core domain; that stretch reads AYDMIKTSVN…KALLRYHDPA (280 aa). [4Fe-4S] cluster contacts are provided by C377, C381, and C384. A disordered region spans residues 675-777; it reads AQTPAQRRKS…PAGQRKPKRR (103 aa). The segment covering 680–698 has biased composition (basic residues); that stretch reads QRRKSGRHGANRFATKHTK. Residues 709 to 719 are compositionally biased toward basic and acidic residues; sequence KRAEGGSKDGK. Over residues 736-747 the composition is skewed to polar residues; sequence PASNGQRPSGNG. A compositionally biased stretch (low complexity) spans 755-769; that stretch reads KPQGQGRPQGQGKPA.

It belongs to the UPF0313 family. It depends on [4Fe-4S] cluster as a cofactor.

The polypeptide is UPF0313 protein VP1980 (Vibrio parahaemolyticus serotype O3:K6 (strain RIMD 2210633)).